We begin with the raw amino-acid sequence, 590 residues long: V-type ATP synthase alpha chain (590 aa).

Gly-234–Thr-241 contacts ATP.

It belongs to the ATPase alpha/beta chains family.

It carries out the reaction ATP + H2O + 4 H(+)(in) = ADP + phosphate + 5 H(+)(out). Its function is as follows. Produces ATP from ADP in the presence of a proton gradient across the membrane. The V-type alpha chain is a catalytic subunit. In Halothermothrix orenii (strain H 168 / OCM 544 / DSM 9562), this protein is V-type ATP synthase alpha chain.